The sequence spans 515 residues: ATP synthase subunit alpha (515 aa).

169–176 serves as a coordination point for ATP; sequence GDRQTGKT.

The protein belongs to the ATPase alpha/beta chains family. F-type ATPases have 2 components, CF(1) - the catalytic core - and CF(0) - the membrane proton channel. CF(1) has five subunits: alpha(3), beta(3), gamma(1), delta(1), epsilon(1). CF(0) has three main subunits: a(1), b(2) and c(9-12). The alpha and beta chains form an alternating ring which encloses part of the gamma chain. CF(1) is attached to CF(0) by a central stalk formed by the gamma and epsilon chains, while a peripheral stalk is formed by the delta and b chains.

Its subcellular location is the cell inner membrane. It carries out the reaction ATP + H2O + 4 H(+)(in) = ADP + phosphate + 5 H(+)(out). Its function is as follows. Produces ATP from ADP in the presence of a proton gradient across the membrane. The alpha chain is a regulatory subunit. The protein is ATP synthase subunit alpha of Myxococcus xanthus.